The following is a 315-amino-acid chain: Periplasmic [NiFeSe] hydrogenase small subunit (315 aa).

A signal peptide (tat-type signal) is located at residues 1 to 32; sequence MSLSRREFVKLCSAGVAGLGISQIYHPGIVHA. The [4Fe-4S] cluster site is built by C50, C53, C158, C196, H240, C243, C263, C269, C278, C290, C296, and C299.

Belongs to the [NiFe]/[NiFeSe] hydrogenase small subunit family. As to quaternary structure, heterodimer of a large and a small subunit. Requires [4Fe-4S] cluster as cofactor. Predicted to be exported by the Tat system. The position of the signal peptide cleavage has been experimentally proven.

It localises to the periplasm. The enzyme catalyses H2 + A = AH2. The polypeptide is Periplasmic [NiFeSe] hydrogenase small subunit (Desulfomicrobium baculatum (Desulfovibrio baculatus)).